The sequence spans 500 residues: Cytochrome P450 6B4 (500 aa).

A heme-binding site is contributed by cysteine 443.

Belongs to the cytochrome P450 family. Requires heme as cofactor.

It is found in the endoplasmic reticulum membrane. The protein localises to the microsome membrane. It carries out the reaction an organic molecule + reduced [NADPH--hemoprotein reductase] + O2 = an alcohol + oxidized [NADPH--hemoprotein reductase] + H2O + H(+). Its function is as follows. Enables the insect to feed on furanocoumarin-producing plants and evolved as an adaptation for detoxification of xanthotoxin and other furanocoumarins. This isozyme metabolizes isopimpinellin, imperatorin, and bergapten at high rates, xanthotoxin and psoralen at intermediate rates and angelicin, sphondin, and trioxsalen only at very low rates. The protein is Cytochrome P450 6B4 (CYP6B4) of Papilio glaucus (Eastern tiger swallowtail butterfly).